The chain runs to 706 residues: MPSAPSTPPSKRKSKFAGFGKFFKPWKWRKRKSSDSFRETSEVLERKISMRKPREELVKRGLLVEVPEEDVSIPSESPPLRNGHMSVEHANPPEDIGGLKRKTRQDSTGSRPKSGETTVQPCATAEVAPVEPCTATEVASVQPHATAEVAPIQPLATAEVSPVQHCATAEVAPVQPRPVSEVASVQPCPVSEVVPVHPRHLSEKNSEKYRPMSEVAPGASRPTSEVAPLQKVSRDFSKQPLLPPKRPLSSSSSVTQESVLGGQKPDPSTRQQSSVPVPTPRTIHPLPFSKQPPVPPPKPQNRSSNPLMAELSLALGGSTLSPAGSRPSPPIPPKRVVVPSTDAVNNKEKALRPASLPPIPANEISIPSPPSPPISSHIPVSNPPVPMLTLAPPNTEVEKEQSASPLPLHIRIQQALNSPQPLPLLDSSQRAQSLLFMQNEVPSEEGTRVRSLPVTIELLKVPDDDDDDNSLEDESLSPESSESHPSRVYIGDVPSVTVIPNYLPTCVQEEEEEEEEGVSDTDSEGPVLYREDDEEEEEEETSSLANKVKRKDTLAMKLSGRMGPHDSNPEFPQRSREEWNQIRQQIGSQLNRRLSQRPSAEELEQRNILQKNEADRLAEKKEIKRRLTRKLSQRPTVAELVERKILRFNEYVEVTDAHDYDRRADKPWTRLTPADKAAIRKELNEFKSTEMAVHEESKHFTRFHRP.

One copy of the RPEL 1 repeat lies at 42–67; it reads EVLERKISMRKPREELVKRGLLVEVP. 4 disordered regions span residues 65–123, 196–380, 385–404, and 459–579; these read EVPE…QPCA, VHPR…HIPV, VPML…QSAS, and LKVP…REEW. Residues 106 to 121 show a composition bias toward polar residues; the sequence is DSTGSRPKSGETTVQP. Basic and acidic residues predominate over residues 200 to 211; the sequence is HLSEKNSEKYRP. Over residues 266 to 276 the composition is skewed to polar residues; the sequence is DPSTRQQSSVP. Residues 290-299 show a composition bias toward pro residues; the sequence is KQPPVPPPKP. 3 stretches are compositionally biased toward acidic residues: residues 463-476, 508-523, and 531-541; these read DDDD…DESL, QEEE…DTDS, and EDDEEEEEEET. Positions 563 to 579 are enriched in basic and acidic residues; sequence GPHDSNPEFPQRSREEW. RPEL repeat units follow at residues 588–613 and 625–650; these read SQLN…QKNE and RRLT…RFNE.

It belongs to the phosphatase and actin regulator family. Binds ppp1ca and actin.

The protein resides in the cytoplasm. Its subcellular location is the cell projection. It localises to the lamellipodium. Its function is as follows. Regulator of protein phosphatase 1 (PP1) required for neural tube and optic fissure closure, and enteric neural crest cell (ENCCs) migration during development. Acts as an activator of PP1. During neural tube closure, localizes to the ventral neural tube and activates PP1, leading to down-regulate cell proliferation within cranial neural tissue and the neural retina. Also acts as a regulator of migration of enteric neural crest cells (ENCCs) by activating PP1, leading to repression of the integrin signaling through the rho/rock pathway. This is Phosphatase and actin regulator 4 (phactr4) from Xenopus tropicalis (Western clawed frog).